A 422-amino-acid polypeptide reads, in one-letter code: Gamma-glutamyl phosphate reductase (422 aa).

The protein belongs to the gamma-glutamyl phosphate reductase family.

It is found in the cytoplasm. The catalysed reaction is L-glutamate 5-semialdehyde + phosphate + NADP(+) = L-glutamyl 5-phosphate + NADPH + H(+). Its pathway is amino-acid biosynthesis; L-proline biosynthesis; L-glutamate 5-semialdehyde from L-glutamate: step 2/2. In terms of biological role, catalyzes the NADPH-dependent reduction of L-glutamate 5-phosphate into L-glutamate 5-semialdehyde and phosphate. The product spontaneously undergoes cyclization to form 1-pyrroline-5-carboxylate. The polypeptide is Gamma-glutamyl phosphate reductase (Chloroflexus aurantiacus (strain ATCC 29366 / DSM 635 / J-10-fl)).